The sequence spans 367 residues: Chorismate synthase (367 aa).

NADP(+) is bound by residues R48 and R54. Residues 125–127, 238–239, G278, 293–297, and R319 each bind FMN; these read RSS, NA, and KPTSS.

The protein belongs to the chorismate synthase family. In terms of assembly, homotetramer. It depends on FMNH2 as a cofactor.

The enzyme catalyses 5-O-(1-carboxyvinyl)-3-phosphoshikimate = chorismate + phosphate. It participates in metabolic intermediate biosynthesis; chorismate biosynthesis; chorismate from D-erythrose 4-phosphate and phosphoenolpyruvate: step 7/7. Catalyzes the anti-1,4-elimination of the C-3 phosphate and the C-6 proR hydrogen from 5-enolpyruvylshikimate-3-phosphate (EPSP) to yield chorismate, which is the branch point compound that serves as the starting substrate for the three terminal pathways of aromatic amino acid biosynthesis. This reaction introduces a second double bond into the aromatic ring system. The chain is Chorismate synthase from Stenotrophomonas maltophilia (strain K279a).